A 298-amino-acid chain; its full sequence is tRNA pseudouridine synthase-like 1 (298 aa).

Residue Asp60 is the Nucleophile of the active site. Position 124 (Tyr124) interacts with substrate.

It belongs to the tRNA pseudouridine synthase TruA family.

The catalysed reaction is a uridine in tRNA = a pseudouridine in tRNA. The sequence is that of tRNA pseudouridine synthase-like 1 (pusl1) from Xenopus laevis (African clawed frog).